Here is a 188-residue protein sequence, read N- to C-terminus: C-type lectin domain family 5 member A (188 aa).

At 1-4 the chain is on the cytoplasmic side; the sequence is MNWH. The chain crosses the membrane as a helical; Signal-anchor for type II membrane protein span at residues 5–27; sequence MIISGLIVVVLKVVGMTLFLLYF. The Extracellular portion of the chain corresponds to 28-188; sequence PQIFNKSNDG…YRRICEKNAK (161 aa). The N-linked (GlcNAc...) asparagine glycan is linked to Asn-32. A disulfide bond links Cys-71 and Cys-82. Residues 78–184 enclose the C-type lectin domain; the sequence is YQARCFFLST…CDISYRRICE (107 aa). Residues Asn-93, Asn-144, and Asn-151 are each glycosylated (N-linked (GlcNAc...) asparagine). 2 disulfide bridges follow: Cys-99–Cys-183 and Cys-161–Cys-175.

As to quaternary structure, monomer. Homodimer. The majority of CLEC5A is expressed as a monomeric form on macrophages. Interacts with TYROBP/DAP12. The interaction with TYROBP is required for CLEC5A cell surface expression. Interacts with HCST/DAP10. Forms a CLEC5A/TYROBP/HCST trimolecular complex depending almost solely on TYROBP. In terms of assembly, (Microbial infection) Interacts with dengue virus envelope protein E. In terms of processing, N-glycosylated. Contains sialic acid residues. In terms of tissue distribution, highly expressed in bone marrow with lower levels in synovium, lung and bronchus. Expressed in peripheral blood monocytes and in the monocyte/macrophage cell lines U-937 and Mono-Mac-6, but not in cell lines of other origins. Expression is down-regulated when monocytes differentiate into dendritic cells.

It is found in the cell membrane. Functionally, functions as a positive regulator of osteoclastogenesis. Cell surface receptor that signals via TYROBP. Regulates inflammatory responses. In terms of biological role, (Microbial infection) Critical macrophage receptor for dengue virus serotypes 1-4. The binding of dengue virus to CLEC5A triggers signaling through the phosphorylation of TYROBP. This interaction does not result in viral entry, but stimulates pro-inflammatory cytokine release. This Homo sapiens (Human) protein is C-type lectin domain family 5 member A (CLEC5A).